We begin with the raw amino-acid sequence, 330 residues long: Glycerol-3-phosphate dehydrogenase [NAD(P)+] 1 (330 aa).

NADPH is bound by residues Trp15, Arg35, and Lys105. Sn-glycerol 3-phosphate-binding residues include Lys105, Gly133, and Thr135. An NADPH-binding site is contributed by Ala137. Sn-glycerol 3-phosphate-binding residues include Lys188, Asp241, Ser251, Arg252, and Asn253. Lys188 functions as the Proton acceptor in the catalytic mechanism. NADPH is bound at residue Arg252. Ile276 and Glu278 together coordinate NADPH.

The protein belongs to the NAD-dependent glycerol-3-phosphate dehydrogenase family.

It localises to the cytoplasm. It catalyses the reaction sn-glycerol 3-phosphate + NAD(+) = dihydroxyacetone phosphate + NADH + H(+). It carries out the reaction sn-glycerol 3-phosphate + NADP(+) = dihydroxyacetone phosphate + NADPH + H(+). It functions in the pathway membrane lipid metabolism; glycerophospholipid metabolism. Functionally, catalyzes the reduction of the glycolytic intermediate dihydroxyacetone phosphate (DHAP) to sn-glycerol 3-phosphate (G3P), the key precursor for phospholipid synthesis. This Sphingopyxis alaskensis (strain DSM 13593 / LMG 18877 / RB2256) (Sphingomonas alaskensis) protein is Glycerol-3-phosphate dehydrogenase [NAD(P)+] 1.